Reading from the N-terminus, the 57-residue chain is Serine protease inhibitor Kazal-type 1 (57 aa).

The 54-residue stretch at 4–57 folds into the Kazal-like domain; sequence LQRQANCNLKVNGCNKIYNPICGSDGITYANECLLCLENKKRQTSILVEKSGPC. 3 cysteine pairs are disulfide-bonded: Cys-10/Cys-39, Cys-17/Cys-36, and Cys-25/Cys-57.

The protein resides in the secreted. Its function is as follows. Serine protease inhibitor which exhibits anti-trypsin activity. In the pancreas, protects against trypsin-catalyzed premature activation of zymogens. In terms of biological role, in the male reproductive tract, binds to sperm heads where it modulates sperm capacitance by inhibiting calcium uptake and nitrogen oxide (NO) production. The chain is Serine protease inhibitor Kazal-type 1 (SPINK1) from Canis lupus familiaris (Dog).